Here is a 387-residue protein sequence, read N- to C-terminus: MALTPDTVSSKLATLNETQESITGIAHWVMFHKRYADEIVQIWLEALYESSSNKKLLLLYLLNEVVQQSRVKKISEYIDAVSPYVVNSVADAYASVPASIKTKIKYVFDVWCQRGIFSKEILLSLQERFNNAENSGHSNYYPVGPPEWAPYTRLMTQTSLYAKSAHSTKTVVDALYKSYLEKQSDYSELLDNYKKQLNKASESCKGNYQACIESRSTLITSLESLIEEQKKLLSEEEESLKSVESIISNLENKESTTATSTLTDAGFGDKSSTAGKHNVETTSPPSSSPNSDDAYSPQVDSYSPSINSVPYTSNIVENPSEDNLSPLPPPASGPYSQEEEETSLFKSQRKEENEEESKELPEDSDIYGKDSSPSSDDSSAAGLYGDS.

Residues 1 to 133 enclose the CID domain; sequence MALTPDTVSS…SLQERFNNAE (133 aa). Residues 177-255 adopt a coiled-coil conformation; it reads KSYLEKQSDY…IISNLENKES (79 aa). Residues 257-387 form a disordered region; that stretch reads TATSTLTDAG…SSAAGLYGDS (131 aa). Over residues 283–297 the composition is skewed to low complexity; it reads SPPSSSPNSDDAYSP. Residues 298-323 show a composition bias toward polar residues; that stretch reads QVDSYSPSINSVPYTSNIVENPSEDN. The span at 353–365 shows a compositional bias: acidic residues; sequence NEEESKELPEDSD. Positions 370-379 are enriched in low complexity; sequence DSSPSSDDSS. Phosphoserine is present on serine 372.

This sequence belongs to the UPF0400 (RTT103) family.

The protein is UPF0400 protein C337.03 of Schizosaccharomyces pombe (strain 972 / ATCC 24843) (Fission yeast).